A 155-amino-acid chain; its full sequence is Non-secretory ribonuclease (155 aa).

Residues 1 to 25 (MGPKLLESRLCLLLLLGLVLMLASC) form the signal peptide. Lysine 33 contributes to the substrate binding site. The active-site Proton acceptor is histidine 38. A glycan (N-linked (GlcNAc...) asparagine) is linked at asparagine 41. Intrachain disulfides connect cysteine 47–cysteine 106, cysteine 61–cysteine 118, cysteine 79–cysteine 133, and cysteine 86–cysteine 94. Tyrosine 57 is modified (3'-nitrotyrosine). Position 62 to 66 (62 to 66 (KDINT)) interacts with substrate. N-linked (GlcNAc...) asparagine glycosylation is found at asparagine 83, asparagine 88, and asparagine 107. The active-site Proton donor is histidine 150.

Belongs to the pancreatic ribonuclease family. In terms of assembly, interacts with and forms a tight 1:1 complex with RNH1. Dimerization of two such complexes may occur.

It is found in the lysosome. It localises to the cytoplasmic granule. It catalyses the reaction an [RNA] containing cytidine + H2O = an [RNA]-3'-cytidine-3'-phosphate + a 5'-hydroxy-ribonucleotide-3'-[RNA].. The enzyme catalyses an [RNA] containing uridine + H2O = an [RNA]-3'-uridine-3'-phosphate + a 5'-hydroxy-ribonucleotide-3'-[RNA].. In terms of biological role, this is a non-secretory ribonuclease. It is a pyrimidine specific nuclease with a slight preference for U. Cytotoxin and helminthotoxin. Possesses a wide variety of biological activities. The polypeptide is Non-secretory ribonuclease (Rnase2) (Mus musculus (Mouse)).